The following is a 306-amino-acid chain: Acetyl-coenzyme A carboxylase carboxyl transferase subunit beta (306 aa).

Positions 25–294 (LWIKDPTSGE…VVTPSPPSPT (270 aa)) constitute a CoA carboxyltransferase N-terminal domain. Residues 284 to 306 (AVVTPSPPSPTDSQTSLSKTKAA) form a disordered region.

This sequence belongs to the AccD/PCCB family. As to quaternary structure, acetyl-CoA carboxylase is a heterohexamer composed of biotin carboxyl carrier protein (AccB), biotin carboxylase (AccC) and two subunits each of ACCase subunit alpha (AccA) and ACCase subunit beta (AccD).

The protein resides in the cytoplasm. The catalysed reaction is N(6)-carboxybiotinyl-L-lysyl-[protein] + acetyl-CoA = N(6)-biotinyl-L-lysyl-[protein] + malonyl-CoA. Its pathway is lipid metabolism; malonyl-CoA biosynthesis; malonyl-CoA from acetyl-CoA: step 1/1. Its function is as follows. Component of the acetyl coenzyme A carboxylase (ACC) complex. Biotin carboxylase (BC) catalyzes the carboxylation of biotin on its carrier protein (BCCP) and then the CO(2) group is transferred by the transcarboxylase to acetyl-CoA to form malonyl-CoA. This chain is Acetyl-coenzyme A carboxylase carboxyl transferase subunit beta, found in Bartonella tribocorum (strain CIP 105476 / IBS 506).